An 855-amino-acid polypeptide reads, in one-letter code: Envelope glycoprotein gp160 (855 aa).

The first 31 residues, 1-31 (MRAREIERNCPNLWKWGIMLLGILMICSAAD), serve as a signal peptide directing secretion. At 32–683 (NLWVTVYYGV…ITQWLWYIKI (652 aa)) the chain is on the extracellular side. Cysteine 53 and cysteine 73 are joined by a disulfide. N-linked (GlcNAc...) asparagine; by host glycosylation is found at asparagine 87, asparagine 129, asparagine 140, asparagine 145, asparagine 154, asparagine 158, asparagine 186, asparagine 189, asparagine 199, asparagine 236, asparagine 243, asparagine 264, asparagine 278, asparagine 291, and asparagine 297. Disulfide bonds link cysteine 118-cysteine 207, cysteine 125-cysteine 198, cysteine 130-cysteine 155, cysteine 220-cysteine 249, and cysteine 230-cysteine 241. Residues 130 to 154 (CTDESDEWMGNVTGKNVTEDIRMKN) form a V1 region. Residues 155–198 (CSFNITTVVRDKTKQVHALFYRLDIVPIDNDNSTNSTNYRLINC) form a V2 region. The segment at 298-331 (CTRPYKNTRQSTPIGLGQALYTTRGRTKIIGQAH) is V3. A disulfide bridge connects residues cysteine 298 and cysteine 332. 3 N-linked (GlcNAc...) asparagine; by host glycosylation sites follow: asparagine 333, asparagine 340, and asparagine 355. The segment at 364 to 374 (SSGGDAEITTH) is CD4-binding loop. 2 disulfides stabilise this stretch: cysteine 378–cysteine 444 and cysteine 385–cysteine 417. Positions 385-417 (CNTSGLFNSTWNINNSEGANSTESDNKLITLQC) are V4. Asparagine 386, asparagine 392, asparagine 398, asparagine 404, asparagine 443, asparagine 447, asparagine 460, asparagine 461, and asparagine 464 each carry an N-linked (GlcNAc...) asparagine; by host glycan. 2 V5 regions span residues 459 to 470 (TNNSSNETFRPG) and 462 to 470 (SSNETFRPG). The fusion peptide stretch occupies residues 511-531 (AIGLGAMFLGFLGAAGSTMGA). Residues 573–591 (KQLQARILAVERYLKDQQL) form an immunosuppression region. Residues cysteine 597 and cysteine 603 are joined by a disulfide bond. N-linked (GlcNAc...) asparagine; by host glycans are attached at residues asparagine 610, asparagine 615, asparagine 624, asparagine 636, and asparagine 673. Residues 632-666 (REIDNYTGLIYRLIEESQTQQEKNEQELLELDKWA) adopt a coiled-coil conformation. The interval 661–682 (ELDKWASLWNWFNITQWLWYIK) is MPER; binding to GalCer. The helical transmembrane segment at 684 to 704 (FIMIVGGLIGLRIVFAVLSLV) threads the bilayer. Residues 705–855 (NRVRQGYSPL…IRQGLERLLL (151 aa)) lie on the Cytoplasmic side of the membrane. Residues 711 to 714 (YSPL) carry the YXXL motif; contains endocytosis signal motif. Cysteine 763 carries S-palmitoyl cysteine; by host lipidation. Positions 854-855 (LL) match the Di-leucine internalization motif motif.

The protein belongs to the HIV-1 env protein family. In terms of assembly, the mature envelope protein (Env) consists of a homotrimer of non-covalently associated gp120-gp41 heterodimers. The resulting complex protrudes from the virus surface as a spike. There seems to be as few as 10 spikes on the average virion. Interacts with host CD4, CCR5 and CXCR4. Gp120 also interacts with the C-type lectins CD209/DC-SIGN and CLEC4M/DC-SIGNR (collectively referred to as DC-SIGN(R)). Gp120 and gp41 interact with GalCer. Gp120 interacts with host ITGA4/ITGB7 complex; on CD4+ T-cells, this interaction results in rapid activation of integrin ITGAL/LFA-1, which facilitates efficient cell-to-cell spreading of HIV-1. Gp120 interacts with cell-associated heparan sulfate; this interaction increases virus infectivity on permissive cells and may be involved in infection of CD4- cells. The mature envelope protein (Env) consists of a homotrimer of non-covalently associated gp120-gp41 heterodimers. The resulting complex protrudes from the virus surface as a spike. There seems to be as few as 10 spikes on the average virion. Post-translationally, highly glycosylated by host. The high number of glycan on the protein is reffered to as 'glycan shield' because it contributes to hide protein sequence from adaptive immune system. In terms of processing, palmitoylation of the transmembrane protein and of Env polyprotein (prior to its proteolytic cleavage) is essential for their association with host cell membrane lipid rafts. Palmitoylation is therefore required for envelope trafficking to classical lipid rafts, but not for viral replication. Specific enzymatic cleavages in vivo yield mature proteins. Envelope glycoproteins are synthesized as an inactive precursor that is heavily N-glycosylated and processed likely by host cell furin in the Golgi to yield the mature SU and TM proteins. The cleavage site between SU and TM requires the minimal sequence [KR]-X-[KR]-R. About 2 of the 9 disulfide bonds of gp41 are reduced by P4HB/PDI, following binding to CD4 receptor.

The protein localises to the virion membrane. It is found in the host cell membrane. It localises to the host endosome membrane. Oligomerizes in the host endoplasmic reticulum into predominantly trimers. In a second time, gp160 transits in the host Golgi, where glycosylation is completed. The precursor is then proteolytically cleaved in the trans-Golgi and thereby activated by cellular furin or furin-like proteases to produce gp120 and gp41. Functionally, attaches the virus to the host lymphoid cell by binding to the primary receptor CD4. This interaction induces a structural rearrangement creating a high affinity binding site for a chemokine coreceptor like CXCR4 and/or CCR5. Acts as a ligand for CD209/DC-SIGN and CLEC4M/DC-SIGNR, which are respectively found on dendritic cells (DCs), and on endothelial cells of liver sinusoids and lymph node sinuses. These interactions allow capture of viral particles at mucosal surfaces by these cells and subsequent transmission to permissive cells. HIV subverts the migration properties of dendritic cells to gain access to CD4+ T-cells in lymph nodes. Virus transmission to permissive T-cells occurs either in trans (without DCs infection, through viral capture and transmission), or in cis (following DCs productive infection, through the usual CD4-gp120 interaction), thereby inducing a robust infection. In trans infection, bound virions remain infectious over days and it is proposed that they are not degraded, but protected in non-lysosomal acidic organelles within the DCs close to the cell membrane thus contributing to the viral infectious potential during DCs' migration from the periphery to the lymphoid tissues. On arrival at lymphoid tissues, intact virions recycle back to DCs' cell surface allowing virus transmission to CD4+ T-cells. Its function is as follows. Acts as a class I viral fusion protein. Under the current model, the protein has at least 3 conformational states: pre-fusion native state, pre-hairpin intermediate state, and post-fusion hairpin state. During fusion of viral and target intracellular membranes, the coiled coil regions (heptad repeats) assume a trimer-of-hairpins structure, positioning the fusion peptide in close proximity to the C-terminal region of the ectodomain. The formation of this structure appears to drive apposition and subsequent fusion of viral and target cell membranes. Complete fusion occurs in host cell endosomes and is dynamin-dependent, however some lipid transfer might occur at the plasma membrane. The virus undergoes clathrin-dependent internalization long before endosomal fusion, thus minimizing the surface exposure of conserved viral epitopes during fusion and reducing the efficacy of inhibitors targeting these epitopes. Membranes fusion leads to delivery of the nucleocapsid into the cytoplasm. The chain is Envelope glycoprotein gp160 from Homo sapiens (Human).